Consider the following 259-residue polypeptide: Enkurin (259 aa).

Disordered regions lie at residues M1–Q26 and P76–P98. Over residues P76 to K88 the composition is skewed to basic and acidic residues. The SH3-binding motif lies at R86–P92. Positions K163–I255 constitute an Enkurin domain. The segment at K163–K258 is interaction with TRPC proteins. Residues I179–R190 enclose the IQ domain.

As to quaternary structure, microtubule inner protein component of sperm flagellar doublet microtubules. Binds calmodulin via its IQ domain. Interacts with TRPC1, TRPC2, TRPC5, but not TRPC3. Interacts with CFAP45. In terms of tissue distribution, expressed in trachea multiciliated cells.

The protein resides in the cytoplasm. It localises to the cytoskeleton. Its subcellular location is the flagellum axoneme. It is found in the cilium axoneme. Its function is as follows. Adapter that functions to localize a calcium-sensitive signal transduction machinery in sperm to a calcium-permeable ion channel. Microtubule inner protein (MIP) part of the dynein-decorated doublet microtubules (DMTs) in cilia axoneme, which is required for motile cilia beating. The chain is Enkurin (ENKUR) from Bos taurus (Bovine).